The primary structure comprises 103 residues: Small ribosomal subunit protein bS6c (103 aa).

It belongs to the bacterial ribosomal protein bS6 family.

Its subcellular location is the plastid. It localises to the chloroplast. Functionally, binds together with bS18 to 16S ribosomal RNA. The sequence is that of Small ribosomal subunit protein bS6c (rps6) from Cyanidium caldarium (Red alga).